Consider the following 304-residue polypeptide: UDP-3-O-acyl-N-acetylglucosamine deacetylase (304 aa).

3 residues coordinate Zn(2+): His-77, His-233, and Asp-237. His-260 serves as the catalytic Proton donor.

It belongs to the LpxC family. Zn(2+) serves as cofactor.

It catalyses the reaction a UDP-3-O-[(3R)-3-hydroxyacyl]-N-acetyl-alpha-D-glucosamine + H2O = a UDP-3-O-[(3R)-3-hydroxyacyl]-alpha-D-glucosamine + acetate. The protein operates within glycolipid biosynthesis; lipid IV(A) biosynthesis; lipid IV(A) from (3R)-3-hydroxytetradecanoyl-[acyl-carrier-protein] and UDP-N-acetyl-alpha-D-glucosamine: step 2/6. In terms of biological role, catalyzes the hydrolysis of UDP-3-O-myristoyl-N-acetylglucosamine to form UDP-3-O-myristoylglucosamine and acetate, the committed step in lipid A biosynthesis. In Lawsonia intracellularis (strain PHE/MN1-00), this protein is UDP-3-O-acyl-N-acetylglucosamine deacetylase.